Reading from the N-terminus, the 129-residue chain is Follitropin subunit beta (129 aa).

A signal peptide spans Met1–Gly20. Cystine bridges form between Cys21–Cys69, Cys35–Cys84, Cys38–Cys122, Cys46–Cys100, Cys50–Cys102, and Cys105–Cys112. 2 N-linked (GlcNAc...) asparagine glycosylation sites follow: Asn25 and Asn42.

Belongs to the glycoprotein hormones subunit beta family. Heterodimer. The active follitropin is a heterodimer composed of an alpha chain/CGA shared with other hormones and a unique beta chain/FSHB shown here.

The protein localises to the secreted. Functionally, together with the alpha chain CGA constitutes follitropin, the follicle-stimulating hormone, and provides its biological specificity to the hormone heterodimer. Binds FSHR, a G protein-coupled receptor, on target cells to activate downstream signaling pathways. Follitropin is involved in follicle development and spermatogenesis in reproductive organs. The sequence is that of Follitropin subunit beta (FSHB) from Monodelphis domestica (Gray short-tailed opossum).